The following is a 273-amino-acid chain: Large ribosomal subunit protein uL2 (273 aa).

Disordered regions lie at residues 35 to 54 (DSKSKSGGRNNNGRITTRHI) and 222 to 273 (GMAM…RRNK). A compositionally biased stretch (polar residues) spans 39–49 (KSGGRNNNGRI). Positions 229-239 (DHPHGGGEGRN) are enriched in basic and acidic residues. Residues 253–273 (KGFKTRKNKRTDKYIVRRRNK) are compositionally biased toward basic residues.

Belongs to the universal ribosomal protein uL2 family. As to quaternary structure, part of the 50S ribosomal subunit. Forms a bridge to the 30S subunit in the 70S ribosome.

Functionally, one of the primary rRNA binding proteins. Required for association of the 30S and 50S subunits to form the 70S ribosome, for tRNA binding and peptide bond formation. It has been suggested to have peptidyltransferase activity; this is somewhat controversial. Makes several contacts with the 16S rRNA in the 70S ribosome. The polypeptide is Large ribosomal subunit protein uL2 (Aeromonas salmonicida (strain A449)).